Reading from the N-terminus, the 140-residue chain is Nucleoside diphosphate kinase (140 aa).

The ATP site is built by Lys11, Phe59, Arg87, Thr93, Arg104, and Asn114. Residue His117 is the Pros-phosphohistidine intermediate of the active site.

The protein belongs to the NDK family. Homotetramer. Mg(2+) is required as a cofactor.

It localises to the cytoplasm. The catalysed reaction is a 2'-deoxyribonucleoside 5'-diphosphate + ATP = a 2'-deoxyribonucleoside 5'-triphosphate + ADP. The enzyme catalyses a ribonucleoside 5'-diphosphate + ATP = a ribonucleoside 5'-triphosphate + ADP. Functionally, major role in the synthesis of nucleoside triphosphates other than ATP. The ATP gamma phosphate is transferred to the NDP beta phosphate via a ping-pong mechanism, using a phosphorylated active-site intermediate. This chain is Nucleoside diphosphate kinase, found in Francisella tularensis subsp. tularensis (strain SCHU S4 / Schu 4).